Here is a 476-residue protein sequence, read N- to C-terminus: Growth/differentiation factor 10 (476 aa).

Residues 1–29 (MAPGLARISLRSQLLPLVPLLLLLRGAGC) form the signal peptide. The propeptide occupies 30–366 (GHRVPSWSSL…EKTMQKARRR (337 aa)). 3 N-linked (GlcNAc...) asparagine glycosylation sites follow: Asn-114, Asn-152, and Asn-277. Disordered stretches follow at residues 268–305 (GDFEPGAAPNSSADPRVRRAAQVSKPLQDNELPGLDER) and 330–358 (PRTGRKDRKKKDQDTFTPSSSQVLDFDEK). Cystine bridges form between Cys-374–Cys-441, Cys-403–Cys-473, and Cys-407–Cys-475. Asn-467 carries an N-linked (GlcNAc...) asparagine glycan.

The protein belongs to the TGF-beta family. In terms of assembly, homodimer or heterodimer. Can form a non-covalent complex of the mature region and the pro-region. As to expression, costa, costicartilage, femur, calvaria, trachea, aorta and brain. Predominantly in the cerebellum.

The protein localises to the secreted. Growth factor involved in osteogenesis and adipogenesis. Plays an inhibitory role in the process of osteoblast differentiation via SMAD2/3 pathway. Plays an inhibitory role in the process of adipogenesis. This Rattus norvegicus (Rat) protein is Growth/differentiation factor 10.